We begin with the raw amino-acid sequence, 486 residues long: N-succinylglutamate 5-semialdehyde dehydrogenase (486 aa).

Residue 220 to 225 (GSSRTG) coordinates NAD(+). Catalysis depends on residues glutamate 243 and cysteine 277.

Belongs to the aldehyde dehydrogenase family. AstD subfamily.

It carries out the reaction N-succinyl-L-glutamate 5-semialdehyde + NAD(+) + H2O = N-succinyl-L-glutamate + NADH + 2 H(+). The protein operates within amino-acid degradation; L-arginine degradation via AST pathway; L-glutamate and succinate from L-arginine: step 4/5. Functionally, catalyzes the NAD-dependent reduction of succinylglutamate semialdehyde into succinylglutamate. The sequence is that of N-succinylglutamate 5-semialdehyde dehydrogenase from Shewanella piezotolerans (strain WP3 / JCM 13877).